Consider the following 503-residue polypeptide: Glutamate--tRNA ligase (503 aa).

Residues 15-25 (PSPTGHLHVGG) carry the 'HIGH' region motif. Positions 262-266 (KLSKR) match the 'KMSKS' region motif. An ATP-binding site is contributed by lysine 265.

Belongs to the class-I aminoacyl-tRNA synthetase family. Glutamate--tRNA ligase type 1 subfamily. Monomer.

It is found in the cytoplasm. The catalysed reaction is tRNA(Glu) + L-glutamate + ATP = L-glutamyl-tRNA(Glu) + AMP + diphosphate. Functionally, catalyzes the attachment of glutamate to tRNA(Glu) in a two-step reaction: glutamate is first activated by ATP to form Glu-AMP and then transferred to the acceptor end of tRNA(Glu). The polypeptide is Glutamate--tRNA ligase (Chlorobium phaeobacteroides (strain BS1)).